Reading from the N-terminus, the 1343-residue chain is DNA-directed RNA polymerase subunit beta (1343 aa).

The protein belongs to the RNA polymerase beta chain family. The RNAP catalytic core consists of 2 alpha, 1 beta, 1 beta' and 1 omega subunit. When a sigma factor is associated with the core the holoenzyme is formed, which can initiate transcription.

It catalyses the reaction RNA(n) + a ribonucleoside 5'-triphosphate = RNA(n+1) + diphosphate. In terms of biological role, DNA-dependent RNA polymerase catalyzes the transcription of DNA into RNA using the four ribonucleoside triphosphates as substrates. The chain is DNA-directed RNA polymerase subunit beta from Haemophilus influenzae (strain ATCC 51907 / DSM 11121 / KW20 / Rd).